Consider the following 382-residue polypeptide: D-galactonate dehydratase (382 aa).

D183 is a Mg(2+) binding site. H185 serves as the catalytic Proton donor. Mg(2+)-binding residues include E209 and E235. H285 acts as the Proton acceptor in catalysis.

The protein belongs to the mandelate racemase/muconate lactonizing enzyme family. GalD subfamily. The cofactor is Mg(2+).

It catalyses the reaction D-galactonate = 2-dehydro-3-deoxy-D-galactonate + H2O. Its pathway is carbohydrate acid metabolism; D-galactonate degradation; D-glyceraldehyde 3-phosphate and pyruvate from D-galactonate: step 1/3. In terms of biological role, catalyzes the dehydration of D-galactonate to 2-keto-3-deoxy-D-galactonate. The chain is D-galactonate dehydratase from Escherichia coli (strain UTI89 / UPEC).